The chain runs to 802 residues: Ent-copalyl diphosphate synthase, chloroplastic (802 aa).

A chloroplast-targeting transit peptide spans 1–60; it reads MSLQYHVLNSIPSTTFLSSTKTTISSSFLTISGSPLNVARDKSRSGSIHCSKLRTQEYIN. Lysine 245 contacts substrate. Mg(2+) is bound by residues aspartate 377 and aspartate 379. The DXDD motif signature appears at 377–380; that stretch reads DIDD. A substrate-binding site is contributed by lysine 463.

This sequence belongs to the terpene synthase family. Tpsc subfamily. The cofactor is Mg(2+). Post-translationally, the N-terminus is blocked. As to expression, expressed in roots, leaves, flowers and also in siliques.

It is found in the plastid. The protein resides in the chloroplast. The catalysed reaction is (2E,6E,10E)-geranylgeranyl diphosphate = ent-copalyl diphosphate. Its pathway is plant hormone biosynthesis; gibberellin biosynthesis. Inhibited by high concentrations of magnesium. Its function is as follows. Catalyzes the conversion of geranylgeranyl diphosphate to the gibberellin precursor ent-copalyl diphosphate. The polypeptide is Ent-copalyl diphosphate synthase, chloroplastic (GA1) (Arabidopsis thaliana (Mouse-ear cress)).